We begin with the raw amino-acid sequence, 143 residues long: Actin-depolymerizing factor 5 (143 aa).

Residues 11-143 (GMNVKEECQR…GYDVIRGRAQ (133 aa)) form the ADF-H domain.

Belongs to the actin-binding proteins ADF family.

Its function is as follows. Actin-depolymerizing protein. Severs actin filaments (F-actin) and binds to actin monomers. This is Actin-depolymerizing factor 5 (ADF5) from Oryza sativa subsp. japonica (Rice).